Here is a 711-residue protein sequence, read N- to C-terminus: Polyribonucleotide nucleotidyltransferase (711 aa).

The Mg(2+) site is built by Asp-487 and Asp-493. Residues 554 to 613 (PRIHTMKISAEKIKDVIGKGGAVIRALTEETGTTIEIEDDGTIKIAATEGAAAKEAIRRI) form the KH domain. One can recognise an S1 motif domain in the interval 623–691 (GRIYTGKVAR…RQGRVRLSMK (69 aa)). Residues 691–711 (KEAVEKPAEEAAAEAPAAKEE) form a disordered region.

The protein belongs to the polyribonucleotide nucleotidyltransferase family. Component of the RNA degradosome, which is a multiprotein complex involved in RNA processing and mRNA degradation. Mg(2+) serves as cofactor.

The protein resides in the cytoplasm. The enzyme catalyses RNA(n+1) + phosphate = RNA(n) + a ribonucleoside 5'-diphosphate. Functionally, involved in mRNA degradation. Catalyzes the phosphorolysis of single-stranded polyribonucleotides processively in the 3'- to 5'-direction. The polypeptide is Polyribonucleotide nucleotidyltransferase (Vibrio parahaemolyticus serotype O3:K6 (strain RIMD 2210633)).